The following is a 130-amino-acid chain: Putative pre-16S rRNA nuclease (130 aa).

The protein belongs to the YqgF nuclease family.

It localises to the cytoplasm. In terms of biological role, could be a nuclease involved in processing of the 5'-end of pre-16S rRNA. The sequence is that of Putative pre-16S rRNA nuclease from Buchnera aphidicola subsp. Cinara cedri (strain Cc).